We begin with the raw amino-acid sequence, 355 residues long: MASRQAPLCGLAPCCLWLLGVVLLMNASARPANHSSARERAGNREENEILPPDHLNGVKLEMDGHLNKDFHQEVFLGKDMDDFEEDAEPRKSRRKLMVIFSKVDLNTDRRISAKEMQKWIMQKTAEHFQEAVAESRAHFRAVDPDGDGHVSWDEYKVKFLATKGHNEREVAEKIKNKWDLNIDEETQEVLENLKDRWYQADNPPPDLLLTESEFLSFLHPEHSRGMLQFMVKEIIRDLDQDGDKKLSLSEFISLPVGTVENQQGQDVDDSWVRDRKREFEELIDANHDGIVTMAELEDYMDPMNEFSALNEAKQMIAIADENQNHYLEPEEVLKYSEFFTGSKLVDYARSVHEEF.

The first 29 residues, 1 to 29 (MASRQAPLCGLAPCCLWLLGVVLLMNASA), serve as a signal peptide directing secretion. Asparagine 33 carries N-linked (GlcNAc...) asparagine glycosylation. EF-hand domains follow at residues 91–126 (KSRRKLMVIFSKVDLNTDRRISAKEMQKWIMQKTAE) and 130–165 (EAVAESRAHFRAVDPDGDGHVSWDEYKVKFLATKGH). Position 92 is a phosphoserine (serine 92). The Ca(2+) site is built by aspartate 104, asparagine 106, aspartate 108, arginine 110, glutamate 115, aspartate 143, aspartate 145, aspartate 147, histidine 149, and glutamate 154. A phosphothreonine mark is found at threonine 186 and threonine 210. EF-hand domains follow at residues 226-261 (MLQFMVKEIIRDLDQDGDKKLSLSEFISLPVGTVEN), 271-306 (WVRDRKREFEELIDANHDGIVTMAELEDYMDPMNEF), and 307-342 (SALNEAKQMIAIADENQNHYLEPEEVLKYSEFFTGS). 5 residues coordinate Ca(2+): aspartate 239, aspartate 241, aspartate 243, lysine 245, and glutamate 250. Threonine 258 carries the post-translational modification Phosphothreonine. The Ca(2+) site is built by aspartate 284, asparagine 286, and aspartate 288. Residue threonine 292 is modified to Phosphothreonine. Positions 295, 320, 322, 324, 326, and 331 each coordinate Ca(2+). The segment at 302–355 (PMNEFSALNEAKQMIAIADENQNHYLEPEEVLKYSEFFTGSKLVDYARSVHEEF) is necessary for intracellular retention in Golgi apparatus lumen.

The protein belongs to the CREC family.

It is found in the golgi apparatus lumen. Functionally, may regulate calcium-dependent activities in the endoplasmic reticulum lumen or post-ER compartment. The polypeptide is 45 kDa calcium-binding protein (SDF4) (Bos taurus (Bovine)).